Here is a 902-residue protein sequence, read N- to C-terminus: Nitrate reductase [NADPH] (902 aa).

C182 serves as a coordination point for Mo-molybdopterin. In terms of domain architecture, Cytochrome b5 heme-binding spans 537-612 (LPLIFADEVA…LKKYCIGRCS (76 aa)). Positions 572 and 595 each coordinate heme. In terms of domain architecture, FAD-binding FR-type spans 637–751 (RTKVPIVLIS…KGPLGHFTYY (115 aa)). Residues 689–692 (RAYT), 708–712 (LIKVY), F713, 725–727 (LFS), and T778 each bind FAD. NADP(+) is bound at residue 872-879 (CMCGPEGM).

Belongs to the nitrate reductase family. In terms of assembly, homodimer. FAD is required as a cofactor. Requires heme as cofactor. The cofactor is Mo-molybdopterin.

The enzyme catalyses nitrite + NADP(+) + H2O = nitrate + NADPH + H(+). Functionally, nitrate reductase is a key enzyme involved in the first step of nitrate assimilation in plants, fungi and bacteria. This Phytophthora infestans (Potato late blight agent) protein is Nitrate reductase [NADPH] (NIAA).